A 285-amino-acid polypeptide reads, in one-letter code: Flagellar filament 30.7 kDa core protein (285 aa).

Belongs to the bacterial flagellin family. The core of the flagellum consists of several antigenically related polypeptides. In terms of processing, glycosylated. Glycosylation is not essential for motility.

The protein resides in the periplasmic flagellum. It is found in the periplasm. Component of the core of the flagella. This is Flagellar filament 30.7 kDa core protein (flaB3) from Treponema maltophilum.